The sequence spans 195 residues: Interferon tau-11 (195 aa).

The first 23 residues, 1 to 23, serve as a signal peptide directing secretion; the sequence is MAFVLSLLMALVLVSYGPGGSLG. 2 disulfides stabilise this stretch: C24/C122 and C52/C162. N101 carries an N-linked (GlcNAc...) asparagine glycan.

This sequence belongs to the alpha/beta interferon family. IFN-alphaII subfamily. In terms of tissue distribution, constitutively and exclusively expressed in the mononuclear cells of the extraembryonic trophectoderm.

The protein resides in the secreted. Its function is as follows. Paracrine hormone primarily responsible for maternal recognition of pregnancy. Interacts with endometrial receptors, probably type I interferon receptors, and blocks estrogen receptor expression, preventing the estrogen-induced increase in oxytocin receptor expression in the endometrium. This results in the suppression of the pulsatile endometrial release of the luteolytic hormone prostaglandin F2-alpha, hindering the regression of the corpus luteum (luteolysis) and therefore a return to ovarian cyclicity. This, and a possible direct effect of IFN-tau on prostaglandin synthesis, leads in turn to continued ovarian progesterone secretion, which stimulates the secretion by the endometrium of the nutrients required for the growth of the conceptus. In summary, displays particularly high antiviral and antiproliferative potency concurrently with particular weak cytotoxicity, high antiluteolytic activity and immunomodulatory properties. In contrast with other IFNs, IFN-tau is not virally inducible. The sequence is that of Interferon tau-11 (IFNT11) from Ovis aries (Sheep).